The chain runs to 119 residues: Non-structural protein 3b (119 aa).

Residues 3-79 (YVSLLNQVWQ…AARKVCLRLQ (77 aa)) form the DRBM domain.

In terms of assembly, interacts with host RUNX1 isoform b.

The protein localises to the host nucleus. It is found in the host nucleolus. Its subcellular location is the host mitochondrion. Its function is as follows. Induces host cell G0/G1 arrest and apoptosis. In Pipistrellus abramus (Japanese pipistrelle), this protein is Non-structural protein 3b.